The following is a 312-amino-acid chain: MKNHTVIRTFILLGLTGDPHLQVLLFIFLFLTYMLSVTGNLTIITLTLVDHHLKTPMYFFLRNFSFLEVSFTTVCIPRFLYNISMGDNTITYNACASQIFFVILFGATEFFLLAAMSYDRYVAICKPLHYVVIMNNRVCTLLVLCCWVAGLMIIVPPLSLGLQLEFCDSNAIDHFSCDAGPLLKISCSDTWVIEQMVILMAVFALIITLVCVILSYLYIVRTILKFPSVQQRKKAFSTCSSHMIVVSIAYGSCIFIYIKPSAKDEVAINKGVSVLTTSVAPLLNPFIYTLRNKQVKQAFSDSIKRIAFLSKK.

Residues methionine 1 to valine 23 lie on the Extracellular side of the membrane. An N-linked (GlcNAc...) asparagine glycan is attached at asparagine 3. Residues leucine 24–isoleucine 44 form a helical membrane-spanning segment. At threonine 45–histidine 52 the chain is on the cytoplasmic side. A helical transmembrane segment spans residues leucine 53–threonine 73. Topologically, residues valine 74–serine 97 are extracellular. The N-linked (GlcNAc...) asparagine glycan is linked to asparagine 82. A disulfide bridge links cysteine 95 with cysteine 187. The chain crosses the membrane as a helical span at residues glutamine 98 to tyrosine 118. Topologically, residues aspartate 119–arginine 137 are cytoplasmic. A helical membrane pass occupies residues valine 138 to leucine 158. At serine 159–glutamine 195 the chain is on the extracellular side. The chain crosses the membrane as a helical span at residues methionine 196 to serine 215. The Cytoplasmic portion of the chain corresponds to tyrosine 216–alanine 235. A helical transmembrane segment spans residues phenylalanine 236 to isoleucine 256. Topologically, residues tyrosine 257–asparagine 269 are extracellular. The helical transmembrane segment at lysine 270–leucine 290 threads the bilayer. Residues arginine 291–lysine 312 lie on the Cytoplasmic side of the membrane.

It belongs to the G-protein coupled receptor 1 family.

It is found in the cell membrane. Its function is as follows. Odorant receptor. The protein is Olfactory receptor 6C2 (OR6C2) of Homo sapiens (Human).